Here is a 918-residue protein sequence, read N- to C-terminus: Calcium-transporting ATPase type 2C member 1 (918 aa).

Over 1 to 75 (MKVARFQKIP…SEDEPLWKKY (75 aa)) the chain is Cytoplasmic. The helical transmembrane segment at 76 to 96 (ISQFKNPLIMLLLASAVISVL) threads the bilayer. Residues 97-98 (MH) are Extracellular-facing. The helical transmembrane segment at 99–119 (QFDDAVSITVAILIVVTVAFV) threads the bilayer. Residues 120–267 (QEYRSEKSLE…LQKSMDLLGK (148 aa)) lie on the Cytoplasmic side of the membrane. A helical transmembrane segment spans residues 268–288 (QLSFYSFGIIGIIMLVGWLLG). Residues 289–302 (KDILEMFTISVSLA) lie on the Extracellular side of the membrane. Residues 303-323 (VAAIPEGLPIVVTVTLALGVM) form a helical membrane-spanning segment. At 324 to 703 (RMVKKRAIVK…IYNNIKNFVR (380 aa)) the chain is on the cytoplasmic side. The active-site 4-aspartylphosphate intermediate is Asp-350. The Mg(2+) site is built by Asp-643 and Asp-647. A helical transmembrane segment spans residues 704–724 (FQLSTSIAALTLISLATLMNF). Residues 725 to 732 (PNPLNAMQ) are Extracellular-facing. Residues 733-753 (ILWINIIMDGPPAQSLGVEPV) form a helical membrane-spanning segment. Topologically, residues 754-773 (DKDVIRKPPRNWKDSILTKN) are cytoplasmic. Residues 774 to 794 (LILKILVSSIIIVCGTLFVFW) form a helical membrane-spanning segment. Residues 795–842 (RELRDNVITPRDTTMTFTCFVFFDMFNALSSRSQTKSVFEIGLCSNKM) lie on the Extracellular side of the membrane. A helical membrane pass occupies residues 843–863 (FCYAVLGSIMGQLLVIYFPPL). The Cytoplasmic segment spans residues 864–873 (QKVFQTESLS). A helical membrane pass occupies residues 874 to 894 (ILDLLFLLGLTSSVCIVAEII). Residues 895-918 (KKVERSREKIQKHVSSTSSSFLEV) lie on the Extracellular side of the membrane.

This sequence belongs to the cation transport ATPase (P-type) (TC 3.A.3) family. Type IIA subfamily. In terms of assembly, monomer. Homodimer.

It localises to the golgi apparatus. Its subcellular location is the trans-Golgi network membrane. It is found in the golgi stack membrane. The catalysed reaction is Ca(2+)(in) + ATP + H2O = Ca(2+)(out) + ADP + phosphate + H(+). It carries out the reaction Mn(2+)(in) + ATP + H2O = Mn(2+)(out) + ADP + phosphate + H(+). In terms of biological role, ATP-driven pump that supplies the Golgi apparatus with Ca(2+) and Mn(2+) ions, both essential cofactors for processing and trafficking of newly synthesized proteins in the secretory pathway. Within a catalytic cycle, acquires Ca(2+) or Mn(2+) ions on the cytoplasmic side of the membrane and delivers them to the lumenal side. The transfer of ions across the membrane is coupled to ATP hydrolysis and is associated with a transient phosphorylation that shifts the pump conformation from inward-facing to outward-facing state. Plays a primary role in the maintenance of Ca(2+) homeostasis in the trans-Golgi compartment with a functional impact on Golgi and post-Golgi protein sorting as well as a structural impact on cisternae morphology. Responsible for loading the Golgi stores with Ca(2+) ions in keratinocytes, contributing to keratinocyte differentiation and epidermis integrity. Participates in Ca(2+) and Mn(2+) ions uptake into the Golgi store of hippocampal neurons and regulates protein trafficking required for neural polarity. May also play a role in the maintenance of Ca(2+) and Mn(2+) homeostasis and signaling in the cytosol while preventing cytotoxicity. The polypeptide is Calcium-transporting ATPase type 2C member 1 (ATP2C1) (Pongo abelii (Sumatran orangutan)).